A 283-amino-acid chain; its full sequence is Pantothenate synthetase (283 aa).

Residue 34-41 coordinates ATP; the sequence is MGALHEGH. His-41 functions as the Proton donor in the catalytic mechanism. Position 65 (Gln-65) interacts with (R)-pantoate. Gln-65 contributes to the beta-alanine binding site. 152 to 155 serves as a coordination point for ATP; it reads GEKD. Residue Gln-158 participates in (R)-pantoate binding. Residue 189–192 participates in ATP binding; the sequence is MSSR.

The protein belongs to the pantothenate synthetase family. As to quaternary structure, homodimer.

It is found in the cytoplasm. The catalysed reaction is (R)-pantoate + beta-alanine + ATP = (R)-pantothenate + AMP + diphosphate + H(+). Its pathway is cofactor biosynthesis; (R)-pantothenate biosynthesis; (R)-pantothenate from (R)-pantoate and beta-alanine: step 1/1. Functionally, catalyzes the condensation of pantoate with beta-alanine in an ATP-dependent reaction via a pantoyl-adenylate intermediate. This is Pantothenate synthetase from Rhodopseudomonas palustris (strain BisA53).